Consider the following 146-residue polypeptide: uncharacterized protein (146 aa).

The 140-residue stretch at 7–146 folds into the N-acetyltransferase domain; it reads LEINYKTDEL…EGHDVLLWKP (140 aa).

This is an uncharacterized protein from Staphylococcus aureus (strain COL).